Here is a 285-residue protein sequence, read N- to C-terminus: MEATVLLVTDSITLSSKVVTWAIQEFKEKADRGNNLCVLTQANSLEWKSYFSSSSLDVVVFFSEKCEFHKQNLVVELARILKPGGAVFIQTLVSMEDGTTKIHASLEHSLLLAGFVRPEVVASVEGLASSDGLELFALRAQKPTWETGSSFSLKKKSVQKQESLPKPGALSVKPEMNVDLEDLIDEESLLSEEDLKRPPLPSASDCEVSTKRKACKNCTCGRAELEEKQTKLGLTVEQLNNPQSACGNCGLGDAFRCSSCPYKGLSPFKLGEKVSLPGTLLTADM.

The N-terminal SAM-like domain stretch occupies residues 1-150 (MEATVLLVTD…QKPTWETGSS (150 aa)). Residues 150 to 195 (SFSLKKKSVQKQESLPKPGALSVKPEMNVDLEDLIDEESLLSEEDL) form a linker region. The [2Fe-2S] cluster site is built by C206, C215, C218, and C220. The fe-S binding site A stretch occupies residues 206-220 (CEVSTKRKACKNCTC). [4Fe-4S] cluster contacts are provided by C246, C249, C257, and C260. Short sequence motifs (cx2C motif) lie at residues 246-249 (CGNC) and 257-260 (CSSC). The tract at residues 246–260 (CGNCGLGDAFRCSSC) is fe-S binding site B.

This sequence belongs to the anamorsin family. As to quaternary structure, monomer. It depends on [2Fe-2S] cluster as a cofactor. [4Fe-4S] cluster is required as a cofactor.

The protein localises to the cytoplasm. It is found in the mitochondrion intermembrane space. In terms of biological role, component of the cytosolic iron-sulfur (Fe-S) protein assembly (CIA) machinery. Required for the maturation of extramitochondrial Fe-S proteins. Part of an electron transfer chain functioning in an early step of cytosolic Fe-S biogenesis, facilitating the de novo assembly of a [4Fe-4S] cluster on the cytosolic Fe-S scaffold complex. Electrons are transferred from NADPH via a FAD- and FMN-containing diflavin oxidoreductase. Together with the diflavin oxidoreductase, also required for the assembly of the diferric tyrosyl radical cofactor of ribonucleotide reductase (RNR), probably by providing electrons for reduction during radical cofactor maturation in the catalytic small subunit. The sequence is that of Anamorsin homolog 1 from Picea sitchensis (Sitka spruce).